The sequence spans 404 residues: S-adenosylmethionine synthase (404 aa).

Residues 1–13 show a composition bias toward polar residues; sequence MSHSRYFFTSESV. The tract at residues 1 to 20 is disordered; it reads MSHSRYFFTSESVSEGHPDK. Histidine 17 lines the ATP pocket. Aspartate 19 lines the Mg(2+) pocket. Glutamate 45 lines the K(+) pocket. Glutamate 58 and glutamine 101 together coordinate L-methionine. The segment at 101–111 is flexible loop; it reads QSPDINRGVDR. Residues 172 to 174, 246 to 247, aspartate 255, 261 to 262, alanine 278, and lysine 282 each bind ATP; these read DSK, RF, and RK. Aspartate 255 lines the L-methionine pocket. Lysine 286 is a binding site for L-methionine.

Belongs to the AdoMet synthase family. As to quaternary structure, homotetramer; dimer of dimers. The cofactor is Mg(2+). K(+) is required as a cofactor.

The protein resides in the cytoplasm. It catalyses the reaction L-methionine + ATP + H2O = S-adenosyl-L-methionine + phosphate + diphosphate. The protein operates within amino-acid biosynthesis; S-adenosyl-L-methionine biosynthesis; S-adenosyl-L-methionine from L-methionine: step 1/1. Its function is as follows. Catalyzes the formation of S-adenosylmethionine (AdoMet) from methionine and ATP. The overall synthetic reaction is composed of two sequential steps, AdoMet formation and the subsequent tripolyphosphate hydrolysis which occurs prior to release of AdoMet from the enzyme. The chain is S-adenosylmethionine synthase from Chlorobaculum parvum (strain DSM 263 / NCIMB 8327) (Chlorobium vibrioforme subsp. thiosulfatophilum).